A 368-amino-acid polypeptide reads, in one-letter code: Zinc finger protein 24 (368 aa).

A Glycyl lysine isopeptide (Lys-Gly) (interchain with G-Cter in SUMO2) cross-link involves residue Lys-22. A Glycyl lysine isopeptide (Lys-Gly) (interchain with G-Cter in SUMO1); alternate cross-link involves residue Lys-27. A Glycyl lysine isopeptide (Lys-Gly) (interchain with G-Cter in SUMO2); alternate cross-link involves residue Lys-27. Residues 52-134 enclose the SCAN box domain; the sequence is RQRFRQFGYQ…TVLEDLESEL (83 aa). 2 positions are modified to phosphoserine: Ser-132 and Ser-142. Glycyl lysine isopeptide (Lys-Gly) (interchain with G-Cter in SUMO2) cross-links involve residues Lys-147, Lys-177, and Lys-236. The segment at 251–273 adopts a C2H2-type 1 zinc-finger fold; it reads HICDECGKHFSQGSALILHQRIH. Positions 251-301 are necessary and sufficient for nuclear localization; the sequence is HICDECGKHFSQGSALILHQRIHSGEKPYGCVECGKAFSRSSILVQHQRVH. A Phosphoserine modification is found at Ser-274. Glycyl lysine isopeptide (Lys-Gly) (interchain with G-Cter in SUMO2) cross-links involve residues Lys-277 and Lys-286. C2H2-type zinc fingers lie at residues 279–301, 307–329, and 335–357; these read YGCV…QRVH, YKCL…QRIH, and YECV…XXXH. Position 292 is a phosphoserine (Ser-292). Tyr-335 carries the phosphotyrosine modification. Residues Lys-361 and Lys-367 each participate in a glycyl lysine isopeptide (Lys-Gly) (interchain with G-Cter in SUMO2) cross-link.

This sequence belongs to the krueppel C2H2-type zinc-finger protein family. Sumoylated.

The protein localises to the nucleus. Functionally, transcription factor required for myelination of differentiated oligodendrocytes. Required for the conversion of oligodendrocytes from the premyelinating to the myelinating state. In the developing central nervous system (CNS), involved in the maintenance in the progenitor stage by promoting the cell cycle. Specifically binds to the 5'-TCAT-3' DNA sequence. Has transcription repressor activity in vitro. The sequence is that of Zinc finger protein 24 (ZNF24) from Pan paniscus (Pygmy chimpanzee).